The sequence spans 383 residues: Histidine decarboxylase (383 aa).

Residue H120 participates in substrate binding. The residue at position 233 (K233) is an N6-(pyridoxal phosphate)lysine.

The protein belongs to the group II decarboxylase family. Homotetramer. Pyridoxal 5'-phosphate serves as cofactor.

It carries out the reaction L-histidine + H(+) = histamine + CO2. This chain is Histidine decarboxylase, found in Acinetobacter baumannii (strain ATCC 17978 / DSM 105126 / CIP 53.77 / LMG 1025 / NCDC KC755 / 5377).